The primary structure comprises 455 residues: Homeobox protein 14 (455 aa).

5 stretches are compositionally biased toward low complexity: residues 1 to 16 (MNHN…KNNS), 24 to 39 (SSRS…SSSG), 81 to 118 (TTTT…ESPN), 179 to 239 (ESPN…SPSF), and 263 to 294 (NNNN…TNNN). Disordered regions lie at residues 1 to 53 (MNHN…SSIN), 67 to 121 (KQTK…NCNK), 178 to 239 (SESP…SPSF), and 258 to 296 (TLLS…NNGD). 2 DNA-binding regions (homeobox) span residues 310 to 369 (KSGQ…SKSG) and 372 to 431 (SYAK…NKLS). Residues 431–455 (SSKANQDNDNNNNNENNDDSYSDEG) are disordered. Low complexity predominate over residues 435-445 (NQDNDNNNNNE). A compositionally biased stretch (acidic residues) spans 446 to 455 (NNDDSYSDEG).

The protein resides in the nucleus. In terms of biological role, putative transcription factor. This chain is Homeobox protein 14 (hbx14), found in Dictyostelium discoideum (Social amoeba).